The sequence spans 113 residues: Hydrogenase maturation factor HybF (113 aa).

Positions 2 and 3 each coordinate Ni(2+). Zn(2+)-binding residues include Cys-73, Cys-76, Cys-89, and Cys-92.

This sequence belongs to the HypA/HybF family. HybF subfamily.

Involved in the maturation of [NiFe] hydrogenases. Required for nickel insertion into the metal center of the hydrogenase. This chain is Hydrogenase maturation factor HybF, found in Klebsiella pneumoniae.